A 563-amino-acid polypeptide reads, in one-letter code: Forkhead box protein O (563 aa).

Disordered stretches follow at residues 1–72 and 177–243; these read MDDF…DPQQ and KSVR…SYQL. T43 carries the post-translational modification Phosphothreonine; by PKB/AKT1. The segment covering 58–72 has biased composition (polar residues); it reads TKASNQQLANGDPQQ. Positions 90-196 form a DNA-binding region, fork-head; that stretch reads WGNLSYADLI…ETSRYEKRRG (107 aa). S185 is subject to Phosphoserine; by PKB/AKT1. A compositionally biased stretch (polar residues) spans 216–225; that stretch reads ATPSPSSSVS. Residue S253 is modified to Phosphoserine; by PKB/AKT1. Phosphoserine occurs at positions 256, 257, and 262. The tract at residues 317–371 is disordered; that stretch reads AASGLPTQPPPPYQPPQHPQHTQGYALNGPGLSPNSVTTTMSPAYPNSEPSSDSL. The segment covering 323–334 has biased composition (pro residues); that stretch reads TQPPPPYQPPQH. Over residues 349-358 the composition is skewed to polar residues; the sequence is SPNSVTTTMS.

Interacts with melt.

The protein localises to the cytoplasm. The protein resides in the nucleus. In terms of biological role, transcription factor involved in the regulation of the insulin signaling pathway. Consistently activates both the downstream target Thor\d4EBP and the feedback control target InR. Involved in negative regulation of the cell cycle, modulating cell growth and proliferation. In response to cellular stresses, such as nutrient deprivation or increased levels of reactive oxygen species, foxo is activated and inhibits growth through the action of target genes such as Thor. Foxo activated in the adult fat body can regulate lifespan in adults; an insulin peptide itself may function as one secondary messenger of insulin-regulated aging. Also regulates Lip4, homolog of human acid lipases, thereby acting as a key modulator of lipid metabolism by insulin signaling and integrates insulin responses to glucose and lipid homeostasis. The protein is Forkhead box protein O of Drosophila mojavensis (Fruit fly).